A 179-amino-acid polypeptide reads, in one-letter code: MTSRLQVIQGDITQLSVDAIVNAANASLMGGGGVDGAIHRAAGPALLDACKLIRQQQGECQTGHAVITPAGKLSAKAVIHTVGPVWRGGEHQEAELLEEAYRSCLLLAEANHFRSIAFPAISTGVYGYPRAQAAEVAVRTVSDFITRYALPEQVYFVCYDEETARLYARLLTQQGDDPA.

The region spanning M1–G175 is the Macro domain. Residues D11 to I12, N25, G33 to D35, and S122 to Y126 each bind substrate. Catalysis depends on D35, which acts as the Proton acceptor.

Belongs to the MacroD-type family. YmdB subfamily. Homodimer. Interacts with RNase III.

The enzyme catalyses 3''-O-acetyl-ADP-D-ribose + H2O = ADP-D-ribose + acetate + H(+). The catalysed reaction is 2''-O-acetyl-ADP-D-ribose + H2O = ADP-D-ribose + acetate + H(+). In terms of biological role, deacetylates O-acetyl-ADP ribose to yield ADP-ribose and free acetate. Down-regulates ribonuclease 3 (RNase III) activity. Acts by interacting directly with the region of the ribonuclease that is required for dimerization/activation. The protein is O-acetyl-ADP-ribose deacetylase of Salmonella gallinarum (strain 287/91 / NCTC 13346).